A 283-amino-acid chain; its full sequence is Putative 4-diphosphocytidyl-2-C-methyl-D-erythritol kinase (283 aa).

Lysine 10 is an active-site residue. Proline 94–threonine 104 lines the ATP pocket. Aspartate 136 is a catalytic residue.

This sequence belongs to the GHMP kinase family. IspE subfamily.

It catalyses the reaction 4-CDP-2-C-methyl-D-erythritol + ATP = 4-CDP-2-C-methyl-D-erythritol 2-phosphate + ADP + H(+). Its function is as follows. Catalyzes the phosphorylation of the position 2 hydroxy group of 4-diphosphocytidyl-2C-methyl-D-erythritol. The chain is Putative 4-diphosphocytidyl-2-C-methyl-D-erythritol kinase from Streptococcus agalactiae serotype III (strain NEM316).